Here is a 282-residue protein sequence, read N- to C-terminus: Energy-coupling factor transporter ATP-binding protein EcfA1 (282 aa).

Positions 9–243 constitute an ABC transporter domain; that stretch reads IEIDNLSFKY…NDELLNIGLD (235 aa). Residue 43 to 50 coordinates ATP; it reads GHNGSGKS.

The protein belongs to the ABC transporter superfamily. Energy-coupling factor EcfA family. As to quaternary structure, forms a stable energy-coupling factor (ECF) transporter complex composed of 2 membrane-embedded substrate-binding proteins (S component), 2 ATP-binding proteins (A component) and 2 transmembrane proteins (T component).

The protein resides in the cell membrane. Its function is as follows. ATP-binding (A) component of a common energy-coupling factor (ECF) ABC-transporter complex. Unlike classic ABC transporters this ECF transporter provides the energy necessary to transport a number of different substrates. This Ligilactobacillus salivarius (strain UCC118) (Lactobacillus salivarius) protein is Energy-coupling factor transporter ATP-binding protein EcfA1.